A 1379-amino-acid chain; its full sequence is DNA-directed RNA polymerase subunit beta (1379 aa).

This sequence belongs to the RNA polymerase beta chain family. As to quaternary structure, in plastids the minimal PEP RNA polymerase catalytic core is composed of four subunits: alpha, beta, beta', and beta''. When a (nuclear-encoded) sigma factor is associated with the core the holoenzyme is formed, which can initiate transcription.

Its subcellular location is the plastid. The protein localises to the chloroplast. It carries out the reaction RNA(n) + a ribonucleoside 5'-triphosphate = RNA(n+1) + diphosphate. Its function is as follows. DNA-dependent RNA polymerase catalyzes the transcription of DNA into RNA using the four ribonucleoside triphosphates as substrates. The chain is DNA-directed RNA polymerase subunit beta from Trieres chinensis (Marine centric diatom).